A 556-amino-acid chain; its full sequence is Arginine--tRNA ligase (556 aa).

The 'HIGH' region signature appears at 132–142; sequence ANPTGDLHLGH.

Belongs to the class-I aminoacyl-tRNA synthetase family. In terms of assembly, monomer.

Its subcellular location is the cytoplasm. It carries out the reaction tRNA(Arg) + L-arginine + ATP = L-arginyl-tRNA(Arg) + AMP + diphosphate. The protein is Arginine--tRNA ligase of Listeria monocytogenes serovar 1/2a (strain ATCC BAA-679 / EGD-e).